Reading from the N-terminus, the 467-residue chain is Serum response factor homolog B (467 aa).

Residues 1–15 (MELNMNQYDNIESND) are compositionally biased toward polar residues. 3 disordered regions span residues 1–38 (MELN…KSGR), 115–245 (NTPD…NNLT), and 301–467 (IQNI…PSDL). The MADS-box domain maps to 36 to 96 (SGRRKINIEF…GHVYTFATPK (61 aa)). Residues 128 to 205 (NNNNGNNSNN…NNNNNNNNNN (78 aa)) are compositionally biased toward low complexity. Basic and acidic residues predominate over residues 206–220 (CKEEQNMNIPNERKS). Low complexity-rich tracts occupy residues 222–245 (NNIN…NNLT), 301–334 (IQNI…SNNI), 347–392 (GSNS…NSNN), and 401–440 (PSPI…YGGY). Over residues 442–467 (QPFSRNYPLQSNIATNSTVSKAPSDL) the composition is skewed to polar residues.

Its subcellular location is the nucleus. This Dictyostelium discoideum (Social amoeba) protein is Serum response factor homolog B (srfB).